The sequence spans 237 residues: Probable transcriptional regulatory protein WS1016 (237 aa).

The protein belongs to the TACO1 family.

The protein resides in the cytoplasm. The polypeptide is Probable transcriptional regulatory protein WS1016 (Wolinella succinogenes (strain ATCC 29543 / DSM 1740 / CCUG 13145 / JCM 31913 / LMG 7466 / NCTC 11488 / FDC 602W) (Vibrio succinogenes)).